The primary structure comprises 348 residues: MSKQTLVLLYGGRSAEREVSVLSAESVMRAVNYDKFLVKTYFITQMGQFIKTQQFSEKPSESERLMTNETIELTQKIKPSDIYEEGAVVFPVLHGPMGEDGSIQGFLEVLRMPYIGTNVMSSSIAMDKITTKRVLESIGIPQVAYTVYIDGQDLEACLVETLARLTFPIFVKPANMGSSVGISKAQTKVELRKAIQLALTYDSRVLIEQGVVAREIEVGLLGNDKVKSTLPGEVIKDVDFYDYQAKYVDNKITMAIPADVDQSIVTEMRSYAEVAFKALGGCGLSRCDFFLTQDGQVYLNELNTMPGFTQWSMYPLLWENMGLAYPDLIEELVTLAQEMFDQRESHLI.

The ATP-grasp domain occupies 132-334 (KRVLESIGIP…YPDLIEELVT (203 aa)). 162-217 (LARLTFPIFVKPANMGSSVGISKAQTKVELRKAIQLALTYDSRVLIEQGVVAREIE) lines the ATP pocket. Residues D288, E301, and N303 each contribute to the Mg(2+) site.

Belongs to the D-alanine--D-alanine ligase family. Mg(2+) serves as cofactor. Requires Mn(2+) as cofactor.

The protein localises to the cytoplasm. The catalysed reaction is 2 D-alanine + ATP = D-alanyl-D-alanine + ADP + phosphate + H(+). The protein operates within cell wall biogenesis; peptidoglycan biosynthesis. In terms of biological role, cell wall formation. In Streptococcus pyogenes serotype M12 (strain MGAS2096), this protein is D-alanine--D-alanine ligase.